Consider the following 156-residue polypeptide: ADP-ribosylation factor-like protein 2-binding protein (156 aa).

Belongs to the ARL2BP family.

Its subcellular location is the cytoplasm. The protein localises to the mitochondrion intermembrane space. It is found in the cytoskeleton. The protein resides in the microtubule organizing center. It localises to the centrosome. Its subcellular location is the nucleus. The protein localises to the spindle. It is found in the cilium basal body. In terms of biological role, plays a role as an effector of the ADP-ribosylation factor-like protein 2, ARL2. This Gallus gallus (Chicken) protein is ADP-ribosylation factor-like protein 2-binding protein (ARL2BP).